The chain runs to 270 residues: Ribonuclease HII (270 aa).

The RNase H type-2 domain occupies 84 to 270 (RYIAGVDEVG…HRNSFLTKLL (187 aa)). Positions 90, 91, and 186 each coordinate a divalent metal cation.

The protein belongs to the RNase HII family. The cofactor is Mn(2+). It depends on Mg(2+) as a cofactor.

The protein localises to the cytoplasm. It carries out the reaction Endonucleolytic cleavage to 5'-phosphomonoester.. Functionally, endonuclease that specifically degrades the RNA of RNA-DNA hybrids. The sequence is that of Ribonuclease HII from Clostridium beijerinckii (strain ATCC 51743 / NCIMB 8052) (Clostridium acetobutylicum).